The primary structure comprises 104 residues: uncharacterized protein (104 aa).

The chain crosses the membrane as a helical span at residues 81 to 97 (CLLMLPCISVVMSISSV).

The protein localises to the cell membrane. This is an uncharacterized protein from Bacillus subtilis (strain 168).